The primary structure comprises 110 residues: ORC1-type DNA replication protein 3 (110 aa).

8–12 (SGKSL) lines the ATP pocket.

Belongs to the CDC6/cdc18 family.

Functionally, involved in regulation of DNA replication. This Halobacterium salinarum (strain ATCC 700922 / JCM 11081 / NRC-1) (Halobacterium halobium) protein is ORC1-type DNA replication protein 3 (orc3).